Consider the following 403-residue polypeptide: MSKFNRIHLVVLDSVGIGAAPDADKFFNAGVADTDSDTLGHISETAGLSVPNMAKIGLGNISRPIPLKTIPTEDNPTGYVTKLEEVSLGKDTMTGHWEIMGLNITEPFDTFWNGFPEEILTKIEEFSGRKIIREANKPYSGTAVIDDFGPRQMETGELIVYTSADPVLQIAAHEDIIPVEELYKICEYARSITLERPALLGRIIARPYVGEPGNFTRTANRHDYAVSPFQDTVLNKLADAGVPTYAVGKINDIFNGSGITNDMGHNKSNSHGIDTLIKTLQLPEFTKGFSFTNLVDFDANFGHRRDPEGYRDCLHEFDNRLPEIFANMKEDDLLLITADHGNDPTYAGTDHTREYIPLLAYSASFTGNGLIPQGHFADISATVAENFGVDTAMIGESFLGHLK.

6 residues coordinate Mn(2+): aspartate 13, aspartate 298, histidine 303, aspartate 339, histidine 340, and histidine 351.

The protein belongs to the phosphopentomutase family. The cofactor is Mn(2+).

The protein localises to the cytoplasm. It carries out the reaction 2-deoxy-alpha-D-ribose 1-phosphate = 2-deoxy-D-ribose 5-phosphate. It catalyses the reaction alpha-D-ribose 1-phosphate = D-ribose 5-phosphate. It participates in carbohydrate degradation; 2-deoxy-D-ribose 1-phosphate degradation; D-glyceraldehyde 3-phosphate and acetaldehyde from 2-deoxy-alpha-D-ribose 1-phosphate: step 1/2. In terms of biological role, isomerase that catalyzes the conversion of deoxy-ribose 1-phosphate (dRib-1-P) and ribose 1-phosphate (Rib-1-P) to deoxy-ribose 5-phosphate (dRib-5-P) and ribose 5-phosphate (Rib-5-P), respectively. The sequence is that of Phosphopentomutase from Streptococcus pyogenes serotype M12 (strain MGAS2096).